Here is a 211-residue protein sequence, read N- to C-terminus: Claudin-13 (211 aa).

The Cytoplasmic portion of the chain corresponds to 1–8 (MVVSKQEA). Residues 9 to 29 (ISFSVTSLGWVGAIVSCVLPV) traverse the membrane as a helical segment. Over 30 to 80 (WRVTFPDDETDPDATIWEGLWHICQVRENRWIQCTLYDTRILVAQDIKVSR) the chain is Extracellular. The helical transmembrane segment at 81-101 (VFMVICTIGTWLGLLLCVLGD) threads the bilayer. Residues 102-118 (WRINCFMNFTIEENLLK) lie on the Cytoplasmic side of the membrane. The helical transmembrane segment at 119 to 139 (VAGGMFLSVGLLMLVPLSWVT) threads the bilayer. Over 140 to 165 (HNIIHGFFNPLLGFSKKVQMGSSLSL) the chain is Extracellular. A helical transmembrane segment spans residues 166–186 (AWTSSLLLLLGGILLCVNIPV). The Cytoplasmic segment spans residues 187 to 211 (CRDFPRCIETPSARPSGANNDTLDV).

Belongs to the claudin family.

The protein resides in the cell junction. The protein localises to the tight junction. Its subcellular location is the cell membrane. Its function is as follows. Plays a major role in tight junction-specific obliteration of the intercellular space, through calcium-independent cell-adhesion activity. This Mus musculus (Mouse) protein is Claudin-13 (Cldn13).